The primary structure comprises 611 residues: Pleckstrin homology domain-containing family N member 1 (611 aa).

Positions Met-1–Arg-45 are disordered. Gly-2 carries N-myristoyl glycine lipidation. Positions Thr-61–Ala-100 are interaction with C1QBP. PH domains follow at residues Val-96–Leu-192 and Ala-222–Glu-319. Tyr-302 carries the post-translational modification Phosphotyrosine. Disordered regions lie at residues Pro-323–Pro-424, Glu-438–Arg-468, and Met-483–Ile-611. Residues Gly-341–Ser-350 are compositionally biased toward low complexity. A compositionally biased stretch (polar residues) spans Ser-360–Arg-391. Tyr-456 is subject to Phosphotyrosine. Residues Val-498–Ser-509 show a composition bias toward low complexity. Ser-559 bears the Phosphoserine mark. A compositionally biased stretch (basic and acidic residues) spans Arg-570–Asp-585.

Found in a complex with cytochrome c mRNA and various ribosomal proteins. Interacts with C1QBP. Interacts with ELAVL1. Interacts with BID. Phosphorylation is essential for its mitochondrial localization and regulates its interaction with C1QBP. In terms of tissue distribution, ubiquitous. Epressed in several cancer cell lines of differing origin.

The protein localises to the cell membrane. Its subcellular location is the mitochondrion. It localises to the mitochondrion membrane. Controls the stability of the leptin mRNA harboring an AU-rich element (ARE) in its 3' UTR, in cooperation with the RNA stabilizer ELAVL1. Decreases the stability of the leptin mRNA by antagonizing the function of ELAVL1 by inducing its atypical recruitment from the nucleus to the cytosol. Binds to cardiolipin (CL), phosphatidic acid (PA), phosphatidylinositol 4-phosphate (PtdIns(4)P) and phosphatidylserine (PS). Promotes apoptosis by enhancing BAX-BAK hetero-oligomerization via interaction with BID in colon cancer cells. The sequence is that of Pleckstrin homology domain-containing family N member 1 (PLEKHN1) from Homo sapiens (Human).